A 99-amino-acid polypeptide reads, in one-letter code: Protein Tat (99 aa).

Residues 1–22 (MDPVDPNLEPWNHPGSQPRTPC) form a disordered region. The interval 1 to 24 (MDPVDPNLEPWNHPGSQPRTPCNK) is interaction with human CREBBP. The tract at residues 1-48 (MDPVDPNLEPWNHPGSQPRTPCNKCHCKKCCYHCPVCFLNKGLGISYG) is transactivation. Zn(2+) contacts are provided by Cys-22, Cys-25, and Cys-27. Residues 22–37 (CNKCHCKKCCYHCPVC) are cysteine-rich. An N6-acetyllysine; by host PCAF modification is found at Lys-28. Positions 30, 33, 34, and 37 each coordinate Zn(2+). Residues 38 to 48 (FLNKGLGISYG) are core. The tract at residues 48-99 (GRKKRRQRRGPPQGGQAHQVPIPKQPSSQPRGDPTGPKEQKKKVESEAETDP) is disordered. A Nuclear localization signal, RNA-binding (TAR), and protein transduction motif is present at residues 49–57 (RKKRRQRRG). The tract at residues 49 to 86 (RKKRRQRRGPPQGGQAHQVPIPKQPSSQPRGDPTGPKE) is interaction with the host capping enzyme RNGTT. Lys-50 and Lys-51 each carry N6-acetyllysine; by host EP300 and GCN5L2. Residues Arg-52 and Arg-53 each carry the asymmetric dimethylarginine; by host PRMT6 modification. A Glycyl lysine isopeptide (Lys-Gly) (interchain with G-Cter in ubiquitin) cross-link involves residue Lys-71. The short motif at 78–80 (RGD) is the Cell attachment site element. Basic and acidic residues predominate over residues 83 to 93 (GPKEQKKKVES).

The protein belongs to the lentiviruses Tat family. Interacts with host CCNT1. Associates with the P-TEFb complex composed at least of Tat, P-TEFb (CDK9 and CCNT1), TAR RNA, RNA Pol II. Recruits the HATs CREBBP, TAF1/TFIID, EP300, PCAF and GCN5L2. Interacts with host KAT5/Tip60; this interaction targets the latter to degradation. Interacts with the host deacetylase SIRT1. Interacts with host capping enzyme RNGTT; this interaction stimulates RNGTT. Binds to host KDR, and to the host integrins ITGAV/ITGB3 and ITGA5/ITGB1. Interacts with host KPNB1/importin beta-1 without previous binding to KPNA1/importin alpha-1. Interacts with EIF2AK2. Interacts with host nucleosome assembly protein NAP1L1; this interaction may be required for the transport of Tat within the nucleus, since the two proteins interact at the nuclear rim. Interacts with host C1QBP/SF2P32; this interaction involves lysine-acetylated Tat. Interacts with the host chemokine receptors CCR2, CCR3 and CXCR4. Interacts with host DPP4/CD26; this interaction may trigger an anti-proliferative effect. Interacts with host LDLR. Interacts with the host extracellular matrix metalloproteinase MMP1. Interacts with host PRMT6; this interaction mediates Tat's methylation. Interacts with, and is ubiquitinated by MDM2/Hdm2. Interacts with host PSMC3 and HTATIP2. Interacts with STAB1; this interaction may overcome SATB1-mediated repression of IL2 and IL2RA (interleukin) in T cells by binding to the same domain than HDAC1. Interacts (when acetylated) with human CDK13, thereby increasing HIV-1 mRNA splicing and promoting the production of the doubly spliced HIV-1 protein Nef. Interacts with host TBP; this interaction modulates the activity of transcriptional pre-initiation complex. Interacts with host RELA. Interacts with host PLSCR1; this interaction negatively regulates Tat transactivation activity by altering its subcellular distribution. Asymmetrical arginine methylation by host PRMT6 seems to diminish the transactivation capacity of Tat and affects the interaction with host CCNT1. Post-translationally, acetylation by EP300, CREBBP, GCN5L2/GCN5 and PCAF regulates the transactivation activity of Tat. EP300-mediated acetylation of Lys-50 promotes dissociation of Tat from the TAR RNA through the competitive binding to PCAF's bromodomain. In addition, the non-acetylated Tat's N-terminus can also interact with PCAF. PCAF-mediated acetylation of Lys-28 enhances Tat's binding to CCNT1. Lys-50 is deacetylated by SIRT1. In terms of processing, polyubiquitination by host MDM2 does not target Tat to degradation, but activates its transactivation function and fosters interaction with CCNT1 and TAR RNA. Phosphorylated by EIF2AK2 on serine and threonine residues adjacent to the basic region important for TAR RNA binding and function. Phosphorylation of Tat by EIF2AK2 is dependent on the prior activation of EIF2AK2 by dsRNA.

The protein resides in the host nucleus. Its subcellular location is the host nucleolus. It localises to the host cytoplasm. It is found in the secreted. In terms of biological role, transcriptional activator that increases RNA Pol II processivity, thereby increasing the level of full-length viral transcripts. Recognizes a hairpin structure at the 5'-LTR of the nascent viral mRNAs referred to as the transactivation responsive RNA element (TAR) and recruits the cyclin T1-CDK9 complex (P-TEFb complex) that will in turn hyperphosphorylate the RNA polymerase II to allow efficient elongation. The CDK9 component of P-TEFb and other Tat-activated kinases hyperphosphorylate the C-terminus of RNA Pol II that becomes stabilized and much more processive. Other factors such as HTATSF1/Tat-SF1, SUPT5H/SPT5, and HTATIP2 are also important for Tat's function. Besides its effect on RNA Pol II processivity, Tat induces chromatin remodeling of proviral genes by recruiting the histone acetyltransferases (HATs) CREBBP, EP300 and PCAF to the chromatin. This also contributes to the increase in proviral transcription rate, especially when the provirus integrates in transcriptionally silent region of the host genome. To ensure maximal activation of the LTR, Tat mediates nuclear translocation of NF-kappa-B by interacting with host RELA. Through its interaction with host TBP, Tat may also modulate transcription initiation. Tat can reactivate a latently infected cell by penetrating in it and transactivating its LTR promoter. In the cytoplasm, Tat is thought to act as a translational activator of HIV-1 mRNAs. Extracellular circulating Tat can be endocytosed by surrounding uninfected cells via the binding to several surface receptors such as CD26, CXCR4, heparan sulfate proteoglycans (HSPG) or LDLR. Neurons are rarely infected, but they internalize Tat via their LDLR. Through its interaction with nuclear HATs, Tat is potentially able to control the acetylation-dependent cellular gene expression. Modulates the expression of many cellular genes involved in cell survival, proliferation or in coding for cytokines or cytokine receptors. Tat plays a role in T-cell and neurons apoptosis. Tat induced neurotoxicity and apoptosis probably contribute to neuroAIDS. Circulating Tat also acts as a chemokine-like and/or growth factor-like molecule that binds to specific receptors on the surface of the cells, affecting many cellular pathways. In the vascular system, Tat binds to ITGAV/ITGB3 and ITGA5/ITGB1 integrins dimers at the surface of endothelial cells and competes with bFGF for heparin-binding sites, leading to an excess of soluble bFGF. This Homo sapiens (Human) protein is Protein Tat.